The chain runs to 241 residues: Large ribosomal subunit protein eL32 (241 aa).

The span at 1–16 (MADNEEDVEAEEEYTE) shows a compositional bias: acidic residues. 2 disordered regions span residues 1-47 (MADN…GADQ) and 68-182 (VGGL…HPSG). The segment covering 29 to 44 (ESLREAGFESVEDVRG) has biased composition (basic and acidic residues). Residues 73 to 96 (VESETEAEVEEEGGEEAPDEDVET) are compositionally biased toward acidic residues. A compositionally biased stretch (basic and acidic residues) spans 103 to 116 (LTEKTPDLSDEDAR). A compositionally biased stretch (basic residues) spans 133–159 (DHHKKKRVSTSWRKPRGQLSKQRRGIK).

This sequence belongs to the eukaryotic ribosomal protein eL32 family. Part of the 50S ribosomal subunit. Interacts weakly with protein L15.

Binds to the 23S rRNA. The sequence is that of Large ribosomal subunit protein eL32 (rpl32e) from Haloarcula marismortui (strain ATCC 43049 / DSM 3752 / JCM 8966 / VKM B-1809) (Halobacterium marismortui).